A 181-amino-acid chain; its full sequence is Inner membrane-spanning protein YciB (181 aa).

The next 5 membrane-spanning stretches (helical) occupy residues 10–30 (LIIF…GALI), 50–70 (MQLI…ALHD), 80–100 (IVYV…KPAI), 120–140 (WAWV…AYHL), and 148–168 (FKVF…GGYI).

This sequence belongs to the YciB family.

The protein resides in the cell inner membrane. Functionally, plays a role in cell envelope biogenesis, maintenance of cell envelope integrity and membrane homeostasis. The polypeptide is Inner membrane-spanning protein YciB (Vibrio cholerae serotype O1 (strain ATCC 39541 / Classical Ogawa 395 / O395)).